Here is a 1070-residue protein sequence, read N- to C-terminus: DNA-directed RNA polymerase subunit beta (1070 aa).

It belongs to the RNA polymerase beta chain family. As to quaternary structure, in plastids the minimal PEP RNA polymerase catalytic core is composed of four subunits: alpha, beta, beta', and beta''. When a (nuclear-encoded) sigma factor is associated with the core the holoenzyme is formed, which can initiate transcription.

The protein resides in the plastid. It is found in the chloroplast. The catalysed reaction is RNA(n) + a ribonucleoside 5'-triphosphate = RNA(n+1) + diphosphate. Its function is as follows. DNA-dependent RNA polymerase catalyzes the transcription of DNA into RNA using the four ribonucleoside triphosphates as substrates. The protein is DNA-directed RNA polymerase subunit beta of Chaetosphaeridium globosum (Charophycean green alga).